Here is a 115-residue protein sequence, read N- to C-terminus: UPF0738 protein SACOL1009 (115 aa).

It belongs to the UPF0738 family.

The sequence is that of UPF0738 protein SACOL1009 from Staphylococcus aureus (strain COL).